We begin with the raw amino-acid sequence, 378 residues long: MAQQAPTMQIDNLLAQVKVLGSSLNVADRAKVQKSLLDALSHVETPYEHMLRLSGSLACIRFGADIGLFKALVESQEPLTCSYLGEKLNANANILGRILRLLASARLVKQTGLDTFTAEKITQELAAQAMESGAHLLFDIHNRTYQALPDYLCENKSKDVDNMHNGIFQKAFSTDLSCYEYLVHNPKLQGFMQDAMKLNQTEGDWLSVLPMEDEIKRWQASDPDRVLFVDIGGGMGHQCIRLRGKYSDIPGRVVLQDMPITVERIPKPMPHGIEAMPYNFEEPQPIKNAKFYYTRNVLHGLTDSASIAALKNVAAAMGTESLLVIDDLIIPDEGACTQACQLDFVMMASIAGKKRTRDQWEDKRKYNEYKCKRNSQFL.

S-adenosyl-L-methionine is bound by residues Gly-232–Gly-233, Asp-257, Asn-279–Phe-280, and Arg-295. The Proton acceptor role is filled by His-299.

Belongs to the class I-like SAM-binding methyltransferase superfamily. Cation-independent O-methyltransferase family.

The protein operates within secondary metabolite biosynthesis; terpenoid biosynthesis. O-methyltransferase; part of the gene cluster that mediates the biosynthesis of diterpenoid pyrones. The first step of the pathway is the synthesis of the alpha-pyrone moiety by the polyketide synthase dpfgA via condensation of one acetyl-CoA starter unit with 3 malonyl-CoA units and 2 methylations. The alpha-pyrone is then combined with geranylgeranyl pyrophosphate (GGPP) formed by the GGPP synthase dpfgD through the action of the prenyltransferase dpfgC to yield a linear alpha-pyrone diterpenoid. Subsequent steps in the diterpenoid pyrone biosynthetic pathway involve the decalin core formation, which is initiated by the epoxidation of the C10-C11 olefin by the FAD-dependent oxidoreductase dpfgE, and is followed by a cyclization cascade catalyzed by the terpene cyclase dpfgB. The short chain dehydrogenase/reductase dpfgG then oxidizes the 8S hydroxy group to a ketone and the short chain dehydrogenase/reductase dpfgH reduces the ketone to the 8R hydroxy group to yield higginsianin B. Higginsianin B is further methylated by the methyltransferase dpfgI to produce the intermediate named FDDP B. The cytochrome P450 monooxygenase dfgpJ then catalyzes a three-step oxidation at C-27 to generate a carboxylic acid as well as C-26 hydroxylation. Finally, methyltransferase dpfgK methylates the carboxylic acid generated by dpfgJ, yielding the final diterpenoid pyrones from the pathway which were named FDDP D and FDDP E. The chain is O-methyltransferase dpfgI from Gibberella zeae (strain ATCC MYA-4620 / CBS 123657 / FGSC 9075 / NRRL 31084 / PH-1) (Wheat head blight fungus).